The sequence spans 347 residues: GTPase Obg (347 aa).

The 159-residue stretch at 1–159 (MHFIDQAEIE…VRLRLELKLI (159 aa)) folds into the Obg domain. Positions 160–328 (AEVGIVGLPN…LLQRVWQCLG (169 aa)) constitute an OBG-type G domain. GTP contacts are provided by residues 166–173 (GLPNAGKS), 191–195 (FTTLQ), 213–216 (DIPG), 280–283 (NKID), and 309–311 (SAI). Residues Ser173 and Thr193 each coordinate Mg(2+).

The protein belongs to the TRAFAC class OBG-HflX-like GTPase superfamily. OBG GTPase family. In terms of assembly, monomer. Requires Mg(2+) as cofactor.

The protein resides in the cytoplasm. Functionally, an essential GTPase which binds GTP, GDP and possibly (p)ppGpp with moderate affinity, with high nucleotide exchange rates and a fairly low GTP hydrolysis rate. Plays a role in control of the cell cycle, stress response, ribosome biogenesis and in those bacteria that undergo differentiation, in morphogenesis control. The protein is GTPase Obg of Synechococcus sp. (strain JA-2-3B'a(2-13)) (Cyanobacteria bacterium Yellowstone B-Prime).